Reading from the N-terminus, the 360-residue chain is Phenylalanine--tRNA ligase alpha subunit (360 aa).

E260 lines the Mg(2+) pocket.

This sequence belongs to the class-II aminoacyl-tRNA synthetase family. Phe-tRNA synthetase alpha subunit type 1 subfamily. In terms of assembly, tetramer of two alpha and two beta subunits. The cofactor is Mg(2+).

Its subcellular location is the cytoplasm. The catalysed reaction is tRNA(Phe) + L-phenylalanine + ATP = L-phenylalanyl-tRNA(Phe) + AMP + diphosphate + H(+). This is Phenylalanine--tRNA ligase alpha subunit from Sinorhizobium medicae (strain WSM419) (Ensifer medicae).